A 737-amino-acid polypeptide reads, in one-letter code: Glycogen [starch] synthase, muscle (737 aa).

A Phosphoserine; by AMPK and PKA modification is found at Ser8. The residue at position 11 (Ser11) is a Phosphoserine. Position 39 (Lys39) interacts with UDP. Residues His205 and Arg211 each contribute to the UDP-alpha-D-glucose site. His291, Glu292, Gln294, His297, and Lys301 together coordinate alpha-D-glucose 6-phosphate. Position 331 (Arg331) interacts with UDP. Arg331 lines the UDP-alpha-D-glucose pocket. Ser412 is subject to Phosphoserine. His501 contributes to the alpha-D-glucose 6-phosphate binding site. UDP-alpha-D-glucose-binding residues include Glu510, Trp512, and Gly513. UDP is bound at residue Thr515. Arg582 and Arg586 together coordinate alpha-D-glucose 6-phosphate. Residues 634–737 (YRYPRPASVP…PTSSLGEERN (104 aa)) are disordered. The residue at position 641 (Ser641) is a Phosphoserine; by DYRK2, GSK3-alpha, GSK3-beta and PASK. Ser645 and Ser649 each carry phosphoserine; by GSK3-alpha and GSK3-beta. Position 652 is a phosphoserine (Ser652). The residue at position 653 (Ser653) is a Phosphoserine; by GSK3-alpha and GSK3-beta. Ser657 is modified (phosphoserine; by CK2). A compositionally biased stretch (acidic residues) spans 658-681 (EDEEDPRNGPLEEDSERYDEDEEA). At Ser672 the chain carries Phosphoserine. Basic and acidic residues predominate over residues 682-695 (AKDRRNIRAPEWPR). Ser698 carries the phosphoserine modification. Residues 698–714 (SCTSSTSGSKRNSVDTA) are compositionally biased toward polar residues. A Phosphothreonine modification is found at Thr700. Ser710 carries the phosphoserine modification. The span at 715-737 (TSSSLSTPSEPLSPTSSLGEERN) shows a compositional bias: low complexity. Residue Thr721 is modified to Phosphothreonine. Residues Ser727 and Ser731 each carry the phosphoserine modification.

The protein belongs to the glycosyltransferase 3 family. Part of the GYS1-GYG1 complex, a heterooctamer composed of a tetramer of GYS1 and 2 dimers of GYG1, where each GYS1 protomer binds to one GYG1 subunit (via GYG1 C-terminus); the GYS1 tetramer may dissociate from GYG1 dimers to continue glycogen polymerization on its own. Post-translationally, phosphorylation at Ser-8 by AMPK inactivates the enzyme activity. Primed phosphorylation at Ser-657 (site 5) by CSNK2A1 and CSNK2A2 is required for inhibitory phosphorylation at Ser-641 (site 3a), Ser-645 (site 3b), Ser-649 (site 3c) and Ser-653 (site 4) by GSK3A an GSK3B. Phosphorylated at Ser-641 by PASK, leading to inactivation; phosphorylation by PASK is inhibited by glycogen. Phosphorylated at Ser-641 by DYRK2, leading to inactivation. Dephosphorylation at Ser-641 and Ser-645 by PP1 activates the enzyme.

It carries out the reaction [(1-&gt;4)-alpha-D-glucosyl](n) + UDP-alpha-D-glucose = [(1-&gt;4)-alpha-D-glucosyl](n+1) + UDP + H(+). It functions in the pathway glycan biosynthesis; glycogen biosynthesis. Allosteric activation by glucose-6-phosphate. Phosphorylation reduces the activity towards UDP-glucose. When in the non-phosphorylated state, glycogen synthase does not require glucose-6-phosphate as an allosteric activator; when phosphorylated it does. Its function is as follows. Glycogen synthase participates in the glycogen biosynthetic process along with glycogenin and glycogen branching enzyme. Extends the primer composed of a few glucose units formed by glycogenin by adding new glucose units to it. In this context, glycogen synthase transfers the glycosyl residue from UDP-Glc to the non-reducing end of alpha-1,4-glucan. This Macaca mulatta (Rhesus macaque) protein is Glycogen [starch] synthase, muscle (GYS1).